The following is a 628-amino-acid chain: 1-deoxy-D-xylulose-5-phosphate synthase (628 aa).

Thiamine diphosphate is bound by residues His72 and 113–115 (GHA). Asp144 contacts Mg(2+). Thiamine diphosphate contacts are provided by residues 145–146 (GA), Asn174, Tyr287, and Glu370. Position 174 (Asn174) interacts with Mg(2+).

Belongs to the transketolase family. DXPS subfamily. Homodimer. The cofactor is Mg(2+). Thiamine diphosphate serves as cofactor.

It catalyses the reaction D-glyceraldehyde 3-phosphate + pyruvate + H(+) = 1-deoxy-D-xylulose 5-phosphate + CO2. It functions in the pathway metabolic intermediate biosynthesis; 1-deoxy-D-xylulose 5-phosphate biosynthesis; 1-deoxy-D-xylulose 5-phosphate from D-glyceraldehyde 3-phosphate and pyruvate: step 1/1. In terms of biological role, catalyzes the acyloin condensation reaction between C atoms 2 and 3 of pyruvate and glyceraldehyde 3-phosphate to yield 1-deoxy-D-xylulose-5-phosphate (DXP). The polypeptide is 1-deoxy-D-xylulose-5-phosphate synthase (Prochlorococcus marinus (strain NATL2A)).